Here is a 239-residue protein sequence, read N- to C-terminus: Segregation and condensation protein A (239 aa).

Belongs to the ScpA family. In terms of assembly, component of a cohesin-like complex composed of ScpA, ScpB and the Smc homodimer, in which ScpA and ScpB bind to the head domain of Smc. The presence of the three proteins is required for the association of the complex with DNA.

It is found in the cytoplasm. In terms of biological role, participates in chromosomal partition during cell division. May act via the formation of a condensin-like complex containing Smc and ScpB that pull DNA away from mid-cell into both cell halves. In Streptococcus suis (strain 98HAH33), this protein is Segregation and condensation protein A.